A 244-amino-acid chain; its full sequence is tRNA pseudouridine synthase A (244 aa).

Catalysis depends on aspartate 52, which acts as the Nucleophile. A substrate-binding site is contributed by tyrosine 110.

It belongs to the tRNA pseudouridine synthase TruA family. As to quaternary structure, homodimer.

The catalysed reaction is uridine(38/39/40) in tRNA = pseudouridine(38/39/40) in tRNA. Functionally, formation of pseudouridine at positions 38, 39 and 40 in the anticodon stem and loop of transfer RNAs. This is tRNA pseudouridine synthase A from Caldicellulosiruptor bescii (strain ATCC BAA-1888 / DSM 6725 / KCTC 15123 / Z-1320) (Anaerocellum thermophilum).